The following is a 229-amino-acid chain: Transmembrane 4 L6 family member 20 (229 aa).

Over 1 to 14 (MTCCEGWTSCNGFS) the chain is Lumenal. Residues 15-35 (LLVLLLLGVVLNAIPLIVSLV) traverse the membrane as a helical segment. The Cytoplasmic portion of the chain corresponds to 36–44 (EEDQFSQNP). A helical membrane pass occupies residues 45–65 (ISCFEWWFPGIIGAGLMAIPA). Residues 66–83 (TTMSLTARKRACCNNRTG) are Lumenal-facing. A helical membrane pass occupies residues 84-104 (MFLSSLFSVITVIGALYCMLI). Residues 105–185 (SIQALLKGPL…HFDSEENKHR (81 aa)) are Cytoplasmic-facing. Residues 186 to 206 (LIHFSVFLGLLLVGILEVLFG) traverse the membrane as a helical segment. The Lumenal portion of the chain corresponds to 207 to 229 (LSQIVIGFLGCLCGVSKRRSQIV).

It belongs to the L6 tetraspanin family. Glycosylated at Asn-132, Asn-148 and Asn-163 in presence of ceramide which inverts the orientation of TM4SF20 in membranes exposing these residues to the endoplasmic reticulum lumen. In terms of processing, cleaved by signal peptidase at Ser-14 but the peptide does not act as a signal peptide. Cleavage is inhibited by ceramide which inverts the orientation of TM4SF20 in membranes exposing the N-terminus to the cytosol and not to the endoplasmic reticulum lumen. Expressed in the brain, with high levels in the parietal lobe, hippocampus, pons, white matter and cerebellum.

Its subcellular location is the membrane. The protein localises to the endoplasmic reticulum membrane. In terms of biological role, polytopic transmembrane protein that inhibits regulated intramembrane proteolysis (RIP) of CREB3L1, inhibiting its activation and the induction of collagen synthesis. In response to ceramide, which alters TM4SF20 membrane topology, stimulates RIP activation of CREB3L1. Ceramide reverses the direction through which transmembrane helices are translocated into the endoplasmic reticulum membrane during translation of TM4SF20, this mechanism is called 'regulated alternative translocation' (RAT) and regulates the function of the transmembrane protein. This is Transmembrane 4 L6 family member 20 (TM4SF20) from Homo sapiens (Human).